The chain runs to 244 residues: Protein A47 (244 aa).

Belongs to the orthopoxvirus A47 protein family.

The chain is Protein A47 from Variola virus.